Consider the following 231-residue polypeptide: Flagellar L-ring protein (231 aa).

An N-terminal signal peptide occupies residues 1 to 20; sequence MTYRRIPLYLSCLFLLALSG. Cys-21 carries N-palmitoyl cysteine lipidation. Cys-21 carries the S-diacylglycerol cysteine lipid modification.

This sequence belongs to the FlgH family. The basal body constitutes a major portion of the flagellar organelle and consists of four rings (L,P,S, and M) mounted on a central rod.

Its subcellular location is the cell outer membrane. It localises to the bacterial flagellum basal body. In terms of biological role, assembles around the rod to form the L-ring and probably protects the motor/basal body from shearing forces during rotation. This is Flagellar L-ring protein from Desulfotalea psychrophila (strain LSv54 / DSM 12343).